The sequence spans 225 residues: Phosphoenolpyruvate guanylyltransferase (225 aa).

T150, G166, and S169 together coordinate phosphoenolpyruvate. Residues P167–P186 form a disordered region.

Belongs to the CofC family.

The catalysed reaction is phosphoenolpyruvate + GTP + H(+) = enolpyruvoyl-2-diphospho-5'-guanosine + diphosphate. It functions in the pathway cofactor biosynthesis; coenzyme F420 biosynthesis. Guanylyltransferase that catalyzes the activation of phosphoenolpyruvate (PEP) as enolpyruvoyl-2-diphospho-5'-guanosine, via the condensation of PEP with GTP. It is involved in the biosynthesis of coenzyme F420, a hydride carrier cofactor. In Rhodococcus erythropolis (strain PR4 / NBRC 100887), this protein is Phosphoenolpyruvate guanylyltransferase.